We begin with the raw amino-acid sequence, 207 residues long: Dephospho-CoA kinase (207 aa).

Residues 10–207 (TLGLTGGIGS…FYLTLRGGQS (198 aa)) form the DPCK domain. 18–23 (GSGKSA) contributes to the ATP binding site.

It belongs to the CoaE family.

It localises to the cytoplasm. It carries out the reaction 3'-dephospho-CoA + ATP = ADP + CoA + H(+). Its pathway is cofactor biosynthesis; coenzyme A biosynthesis; CoA from (R)-pantothenate: step 5/5. Functionally, catalyzes the phosphorylation of the 3'-hydroxyl group of dephosphocoenzyme A to form coenzyme A. The sequence is that of Dephospho-CoA kinase from Pseudomonas fluorescens (strain ATCC BAA-477 / NRRL B-23932 / Pf-5).